Reading from the N-terminus, the 652-residue chain is MTSASPEDQNAPVGCPKGARRRRPISVIGGVSLYGTNQTEELDNLLTQPASRPPMPAHQVPPYKAVSARFRPFTFSQSTPIGLDRVGRRRQMRASNVSSDGGTEPSALVDDNGSEEDFSYEDLCQASPRYLQPGGEQLAINELISDGNVVCAEALWDHVTMDDQELGFKAGDVIQVLEASNKDWWWGRSEDKEAWFPASFVRLRVNQEELSENSSSTPSEEQDEEASQSRHRHCENKQQMRTNVIREIMDTERVYIKHLRDICEGYIRQCRKHTGMFTVAQLATIFGNIEDIYKFQRKFLKDLEKQYNKEEPHLSEIGSCFLQNQEGFAIYSEYCNNHPGACLELANLMKQGKYRHFFEACRLLQQMIDIAIDGFLLTPVQKICKYPLQLAELLKYTTQEHGDYSNIKAAYEAMKNVACLINERKRKLESIDKIARWQVSIVGWEGLDILDRSSELIHSGELTKITKQGKSQQRTFFLFDHQLVSCKKDLLRRDMLYYKGRLDMDEMELVDLGDGRDKDCNLSVKNAFKLVSRTTDEVYLFCAKKQEDKARWLQACADERRRVQEDKEMGMEISENQKKLAMLNAQKAGHGKSKGYNRCPVAPPHQGLHPIHQRHITMPTSVPQQQVFGLAEPKRKSSLFWHTFNRLTPFRK.

The disordered stretch occupies residues 1-24 (MTSASPEDQNAPVGCPKGARRRRP). Residue serine 78 is modified to Phosphoserine. Residues 81–108 (IGLDRVGRRRQMRASNVSSDGGTEPSAL) are disordered. The segment at 98-150 (SSDGGTEPSALVDDNGSEEDFSYEDLCQASPRYLQPGGEQLAINELISDGNVV) is ABR (APC-binding region) domain. The residue at position 114 (serine 114) is a Phosphoserine. An SH3 domain is found at 147–206 (GNVVCAEALWDHVTMDDQELGFKAGDVIQVLEASNKDWWWGRSEDKEAWFPASFVRLRVN). The interval 209 to 235 (ELSENSSSTPSEEQDEEASQSRHRHCE) is disordered. In terms of domain architecture, DH spans 240-424 (MRTNVIREIM…KNVACLINER (185 aa)). The region spanning 455–561 (ELIHSGELTK…WLQACADERR (107 aa)) is the PH domain. Residues 561-652 (RRVQEDKEMG…TFNRLTPFRK (92 aa)) are C-terminal tail.

Interacts (via ABR and SH3 domain) with APC. The binding of APC enhances its GEF activity by relieving it from an autoinhibitory conformation, in which the ABR and SH3 domains are associated with the C-terminal tail. Interacts (via C-terminal tail) with PPP1R9B (via C-terminus). Interacts with RAC1. Expressed at high levels in the placenta, spleen and kidney, at moderate levels in lung, small intestine, liver, brain and heart, and at low levels in skeletal muscle. Expression is aberrantly enhanced in most colorectal tumors.

The protein localises to the cytoplasm. The protein resides in the cell projection. It localises to the filopodium. Its subcellular location is the lamellipodium. It is found in the ruffle membrane. The protein localises to the podosome. With respect to regulation, both the ABR and the SH3 domains contribute to maintaining the protein in an inhibited conformation by associating with the C-terminal tail. Binding of these domains to the C-terminal tail inhibits the activity of the protein by blocking a region that is required for its GEF activity. Its function is as follows. Acts as a guanine nucleotide exchange factor (GEF) for RHOA, RAC1 and CDC42 GTPases. Regulates cell migration and adhesion assembly and disassembly through a RAC1, PI3K, RHOA and AKT1-dependent mechanism. Increases both RAC1 and CDC42 activity, but decreases the amount of active RHOA. Required for MMP9 up-regulation via the JNK signaling pathway in colorectal tumor cells. Involved in tumor angiogenesis and may play a role in intestinal adenoma formation and tumor progression. This is Spermatogenesis-associated protein 13 from Homo sapiens (Human).